Consider the following 309-residue polypeptide: Porphobilinogen deaminase (309 aa).

C241 is modified (S-(dipyrrolylmethanemethyl)cysteine).

It belongs to the HMBS family. Monomer. Dipyrromethane serves as cofactor.

It carries out the reaction 4 porphobilinogen + H2O = hydroxymethylbilane + 4 NH4(+). The protein operates within porphyrin-containing compound metabolism; protoporphyrin-IX biosynthesis; coproporphyrinogen-III from 5-aminolevulinate: step 2/4. Functionally, tetrapolymerization of the monopyrrole PBG into the hydroxymethylbilane pre-uroporphyrinogen in several discrete steps. This Bacillus thuringiensis (strain Al Hakam) protein is Porphobilinogen deaminase.